Here is a 262-residue protein sequence, read N- to C-terminus: MLQYPQIDPVALRIGPLAIHWYGLMYLIGFALVYALGRRRITSGHTTSMTVRDLEDLIFYSVLGVVLGGRLGYVLFYKPAHYLANPLEIFYLWEGGMSFHGGLIGVIVVMLLFAHKKRLGFFTVSDFIAPLIPLGLAAGRLGNFINGELWGRPTDVPWAMVFPQSGDGLPRHPSQLYELGLEGIVLFALLWWYSSKPRAAGQVSAMFLMGYGAFRFLVEFTREPDNFLGLLAAGLSMGQWLSIPMVLAGAGLYLFTARPPSR.

Transmembrane regions (helical) follow at residues 17–37 (LAIHWYGLMYLIGFALVYALG), 57–77 (LIFYSVLGVVLGGRLGYVLFY), 95–115 (GGMSFHGGLIGVIVVMLLFAH), and 119–139 (LGFFTVSDFIAPLIPLGLAAG). R140 is an a 1,2-diacyl-sn-glycero-3-phospho-(1'-sn-glycerol) binding site. 3 helical membrane passes run 173-193 (PSQLYELGLEGIVLFALLWWY), 200-220 (AGQVSAMFLMGYGAFRFLVEF), and 227-247 (FLGLLAAGLSMGQWLSIPMVL).

This sequence belongs to the Lgt family.

The protein localises to the cell inner membrane. It carries out the reaction L-cysteinyl-[prolipoprotein] + a 1,2-diacyl-sn-glycero-3-phospho-(1'-sn-glycerol) = an S-1,2-diacyl-sn-glyceryl-L-cysteinyl-[prolipoprotein] + sn-glycerol 1-phosphate + H(+). The protein operates within protein modification; lipoprotein biosynthesis (diacylglyceryl transfer). Catalyzes the transfer of the diacylglyceryl group from phosphatidylglycerol to the sulfhydryl group of the N-terminal cysteine of a prolipoprotein, the first step in the formation of mature lipoproteins. This Bordetella bronchiseptica (strain ATCC BAA-588 / NCTC 13252 / RB50) (Alcaligenes bronchisepticus) protein is Phosphatidylglycerol--prolipoprotein diacylglyceryl transferase.